The following is a 560-amino-acid chain: Long-chain-fatty-acid--CoA ligase (560 aa).

It belongs to the ATP-dependent AMP-binding enzyme family.

It carries out the reaction a long-chain fatty acid + ATP + CoA = a long-chain fatty acyl-CoA + AMP + diphosphate. The chain is Long-chain-fatty-acid--CoA ligase (lcfA) from Bacillus subtilis (strain 168).